A 48-amino-acid polypeptide reads, in one-letter code: Thiamine thiazole synthase, chloroplastic (48 aa).

Ala18 and Val40 together coordinate substrate.

The protein belongs to the THI4 family. Homooctamer. Requires Fe cation as cofactor.

The protein localises to the plastid. Its subcellular location is the chloroplast. It carries out the reaction [ADP-thiazole synthase]-L-cysteine + glycine + NAD(+) = [ADP-thiazole synthase]-dehydroalanine + ADP-5-ethyl-4-methylthiazole-2-carboxylate + nicotinamide + 3 H2O + 2 H(+). In terms of biological role, involved in biosynthesis of the thiamine precursor thiazole. Catalyzes the conversion of NAD and glycine to adenosine diphosphate 5-(2-hydroxyethyl)-4-methylthiazole-2-carboxylic acid (ADT), an adenylated thiazole intermediate. The reaction includes an iron-dependent sulfide transfer from a conserved cysteine residue of the protein to a thiazole intermediate. The enzyme can only undergo a single turnover, which suggests it is a suicide enzyme. May have additional roles in adaptation to various stress conditions and in DNA damage tolerance. The chain is Thiamine thiazole synthase, chloroplastic (THI1) from Populus euphratica (Euphrates poplar).